The following is a 267-amino-acid chain: Tryptophan synthase alpha chain (267 aa).

Catalysis depends on proton acceptor residues glutamate 49 and aspartate 60.

Belongs to the TrpA family. As to quaternary structure, tetramer of two alpha and two beta chains.

It carries out the reaction (1S,2R)-1-C-(indol-3-yl)glycerol 3-phosphate + L-serine = D-glyceraldehyde 3-phosphate + L-tryptophan + H2O. It participates in amino-acid biosynthesis; L-tryptophan biosynthesis; L-tryptophan from chorismate: step 5/5. Functionally, the alpha subunit is responsible for the aldol cleavage of indoleglycerol phosphate to indole and glyceraldehyde 3-phosphate. This chain is Tryptophan synthase alpha chain, found in Cyanothece sp. (strain PCC 7425 / ATCC 29141).